The chain runs to 397 residues: MTTLLNPYFGEFGGMYVPQILMPALRQLEEAFVSAQKDPEFQAQFNDLLKNYAGRPTALTKCQNITAGTNTTLYLKREDLLHGGAHKTNQVLGQALLAKRMGKTEIIAETGAGQHGVASALASALLGLKCRIYMGAKDVERQSPNVFRMRLMGAEVIPVHSGSATLKDACNEALRDWSGSYETAHYMLGTAAGPHPYPTIVREFQRMIGEETKAQILEREGRLPDAVIACVGGGSNAIGMFADFINETNVGLIGVEPGGHGIETGEHGAPLKHGRVGIYFGMKAPMMQTEDGQIEESYSISAGLDFPSVGPQHAYLNSTGRADYVSITDDEALEAFKTLCLHEGIIPALESSHALAHALKMMRENPEKEQLLVVNLSGRGDKDIFTVHDILKARGEI.

An N6-(pyridoxal phosphate)lysine modification is found at Lys87.

Belongs to the TrpB family. As to quaternary structure, tetramer of two alpha and two beta chains. It depends on pyridoxal 5'-phosphate as a cofactor.

The catalysed reaction is (1S,2R)-1-C-(indol-3-yl)glycerol 3-phosphate + L-serine = D-glyceraldehyde 3-phosphate + L-tryptophan + H2O. The protein operates within amino-acid biosynthesis; L-tryptophan biosynthesis; L-tryptophan from chorismate: step 5/5. In terms of biological role, the beta subunit is responsible for the synthesis of L-tryptophan from indole and L-serine. The protein is Tryptophan synthase beta chain of Escherichia coli O157:H7.